The primary structure comprises 715 residues: MSPHQTTGQESDNMAVNGENAPASSQYIQTNNDEMADMVAAEKKAAAAKAAKDPSRPKRKKAKRACYACQRGHLTCGDERPCQRCIKRGFQDACHDGVRKKAKYLHDAPNEVLMAGVGATLYNQRNAAQNNVNGSNTSPGVPQQMTSPNFYSTQQSPDYNSFPQNKNELHDSTVGPENYASQSPVSPTYQIGQGMPNPVLSPSLPQSASETPSTANAAPGQFNSAFFDPSDPALFNFDLASMNFGNHYGALEFGMLGHMATGVGDTPPSDSGAQRGSIGQNGSGTFGLAGSNFAESPSNQTPYLFNESGMNDWTQTAPVNRRSIYGSNANMVAGNMSDKPHAFAIESAPANFASPASNESPMMTTNSATFEDTTNSGAFSSRPNASVSQQRQQPVVSTPQLKQQNLNLGGRRRHKNASSIYDSVKDPYSYTSGFHSLTAFIQRRFSPQKTLRIAKALASIRPSFIATTKTLNRDDLIFMEKCFQRTLWEYEDFINACGTPTIVCRRTGEIAAVGKEFSILTGWRKEVLLGKEPNHNVNTGGSSGLVTDSTSRGSYTPRPYSSDVYNSSTAATPRTQPVFLAELLDDDSVIEFYEDFAKLAFGDSRGSVMTTCKLLKYKTKADSDILAGSNGEADAGQNGEASSSEANELNGSNANGATTNGRGLRRWGKGEIAGEAGMNQLGFRDGKVECSYCWTVKRDVFDIPMLIVMNFLPCI.

Positions 1–14 (MSPHQTTGQESDNM) are enriched in polar residues. The interval 1 to 28 (MSPHQTTGQESDNMAVNGENAPASSQYI) is disordered. Positions 66–94 (CYACQRGHLTCGDERPCQRCIKRGFQDAC) form a DNA-binding region, zn(2)-C6 fungal-type. 4 stretches are compositionally biased toward polar residues: residues 129 to 166 (QNNV…PQNK), 179 to 191 (YASQ…TYQI), 203 to 223 (SLPQ…GQFN), and 362 to 385 (MMTT…RPNA). Disordered stretches follow at residues 129-223 (QNNV…GQFN), 354-414 (SPAS…RRRH), 534-569 (NHNV…NSST), and 628-663 (GSNG…NGRG). The segment covering 386–400 (SVSQQRQQPVVSTPQ) has biased composition (low complexity). Polar residues-rich tracts occupy residues 535–554 (HNVN…SRGS) and 639–649 (GEASSSEANEL). The span at 650 to 662 (NGSNANGATTNGR) shows a compositional bias: low complexity.

The protein belongs to the ERT1/acuK family.

It is found in the nucleus. Functionally, transcription factor which regulates nonfermentable carbon utilization. Activator of gluconeogenetic genes. The polypeptide is Transcription activator of gluconeogenesis MGYG_02011 (Arthroderma gypseum (strain ATCC MYA-4604 / CBS 118893) (Microsporum gypseum)).